A 272-amino-acid chain; its full sequence is Shikimate dehydrogenase (NADP(+)) (272 aa).

Shikimate-binding positions include serine 14–serine 16 and threonine 61. Catalysis depends on lysine 65, which acts as the Proton acceptor. Residue glutamate 77 participates in NADP(+) binding. 2 residues coordinate shikimate: asparagine 86 and aspartate 102. NADP(+) is bound by residues glycine 126–alanine 130, asparagine 149–lysine 154, and methionine 213. Shikimate is bound at residue tyrosine 215. Glycine 237 contributes to the NADP(+) binding site.

This sequence belongs to the shikimate dehydrogenase family. As to quaternary structure, homodimer.

It carries out the reaction shikimate + NADP(+) = 3-dehydroshikimate + NADPH + H(+). The protein operates within metabolic intermediate biosynthesis; chorismate biosynthesis; chorismate from D-erythrose 4-phosphate and phosphoenolpyruvate: step 4/7. Its function is as follows. Involved in the biosynthesis of the chorismate, which leads to the biosynthesis of aromatic amino acids. Catalyzes the reversible NADPH linked reduction of 3-dehydroshikimate (DHSA) to yield shikimate (SA). The protein is Shikimate dehydrogenase (NADP(+)) of Erwinia tasmaniensis (strain DSM 17950 / CFBP 7177 / CIP 109463 / NCPPB 4357 / Et1/99).